The chain runs to 253 residues: MSLVRGHGDIAATTAAPLSEEGEVTSGLQALAVEDTGGPSASADQAEEEGEGGREEAEHEGSGAEEVQGEAPSPEGEERAKGESEDWCVPCSDEEVELPADGQSWMPPPSEIQRLYELLAAHGTLELQAEILPRRPPTPEAQSEEERSDEEPEAKEEEEEKPHMPTEFDFDDEPTTPKDSLIDRRRTPGSSARSQKREARLDKVLSDMKRHKKLEEQILRTGRDLFSLDSEDASPASPPLRSSGSLFPRQRKY.

2 disordered regions span residues 1 to 109 (MSLV…MPPP) and 128 to 253 (QAEI…QRKY). The segment covering 51–62 (EGGREEAEHEGS) has biased composition (basic and acidic residues). A sufficient for interaction with NCOA1 region spans residues 116-160 (YELLAAHGTLELQAEILPRRPPTPEAQSEEERSDEEPEAKEEEEE). Thr-138 bears the Phosphothreonine mark. Positions 142-159 (QSEEERSDEEPEAKEEEE) are enriched in acidic residues. Phosphoserine is present on residues Ser-143 and Ser-148. Residues 161–253 (KPHMPTEFDF…GSLFPRQRKY (93 aa)) form a sufficient for interaction with ESR1 region. Basic and acidic residues predominate over residues 195-223 (QKREARLDKVLSDMKRHKKLEEQILRTGR). The residue at position 237 (Ser-237) is a Phosphoserine.

As to quaternary structure, component of the KMT2 family MLL2/MLL3 complex, at least composed of the histone methyltransferases KMT2D and/or KMT2C, the common complex subunits ASH2L, RBBP5, WDR5 and DPY30, and the complex type-specific subunits PAXIP1/PTIP, PAGR1, NCOA6 and KDM6A; PAXIP1 is required for the association with the MLL2/MLL3 complex. Forms a constitutive complex with PAXIP1/PTIP independently of the MLL2/MLL3 complex. Interacts with NCOA1, ESR1, NR3C1, AR.

It is found in the nucleus. Its function is as follows. Its association with the histone methyltransferase MLL2/MLL3 complex is suggesting a role in epigenetic transcriptional activation. However, in association with PAXIP1/PTIP is proposed to function at least in part independently of the MLL2/MLL3 complex. Proposed to be recruited by PAXIP1 to sites of DNA damage where the PAGR1:PAXIP1 complex is required for cell survival in response to DNA damage independently of the MLL2/MLL3 complex. However, its function in DNA damage has been questioned. During immunoglobulin class switching in activated B-cells is involved in transcription regulation of downstream switch regions at the immunoglobulin heavy-chain (Igh) locus independently of the MLL2/MLL3 complex. Involved in both estrogen receptor-regulated gene transcription and estrogen-stimulated G1/S cell-cycle transition. Acts as a transcriptional cofactor for nuclear hormone receptors. Inhibits the induction properties of several steroid receptors such as NR3C1, AR and PPARG; the mechanism of inhibition appears to be gene-dependent. The polypeptide is PAXIP1-associated glutamate-rich protein 1 (PAGR1) (Bos taurus (Bovine)).